A 277-amino-acid chain; its full sequence is Diaminopimelate epimerase (277 aa).

3 residues coordinate substrate: asparagine 15, glutamine 48, and asparagine 66. Catalysis depends on cysteine 75, which acts as the Proton donor. Substrate-binding positions include 76 to 77, asparagine 156, asparagine 189, and 207 to 208; these read GN and ER. Cysteine 216 acts as the Proton acceptor in catalysis. 217-218 serves as a coordination point for substrate; that stretch reads GS.

It belongs to the diaminopimelate epimerase family. Homodimer.

It localises to the cytoplasm. It catalyses the reaction (2S,6S)-2,6-diaminopimelate = meso-2,6-diaminopimelate. The protein operates within amino-acid biosynthesis; L-lysine biosynthesis via DAP pathway; DL-2,6-diaminopimelate from LL-2,6-diaminopimelate: step 1/1. Catalyzes the stereoinversion of LL-2,6-diaminopimelate (L,L-DAP) to meso-diaminopimelate (meso-DAP), a precursor of L-lysine and an essential component of the bacterial peptidoglycan. In Acidiphilium cryptum (strain JF-5), this protein is Diaminopimelate epimerase.